The following is a 276-amino-acid chain: Myoblast determination protein 1 homolog 1 (276 aa).

The 52-residue stretch at 84-135 (DRRKAATMRERRRLSKVNDAFETLKRCTSTNPNQRLPKVDILRNAISYIESL) folds into the bHLH domain. Positions 228–253 (CPAVQDGSEGSSPCSPGDGSIASENG) are disordered.

In terms of assembly, efficient DNA binding requires dimerization with another bHLH protein.

It is found in the nucleus. Its function is as follows. May act as a transcriptional activator that promotes transcription of muscle-specific target genes and plays a role in muscle differentiation. The protein is Myoblast determination protein 1 homolog 1 (myod1) of Oncorhynchus mykiss (Rainbow trout).